We begin with the raw amino-acid sequence, 362 residues long: 3-dehydroquinate synthase (362 aa).

Residues 71–76, 105–109, 129–130, Lys142, Lys151, and 169–172 contribute to the NAD(+) site; these read DGEQYK, GVVGD, TT, and CLKT. Zn(2+)-binding residues include Glu184, His247, and His264.

This sequence belongs to the sugar phosphate cyclases superfamily. Dehydroquinate synthase family. Co(2+) serves as cofactor. Requires Zn(2+) as cofactor. It depends on NAD(+) as a cofactor.

Its subcellular location is the cytoplasm. The catalysed reaction is 7-phospho-2-dehydro-3-deoxy-D-arabino-heptonate = 3-dehydroquinate + phosphate. The protein operates within metabolic intermediate biosynthesis; chorismate biosynthesis; chorismate from D-erythrose 4-phosphate and phosphoenolpyruvate: step 2/7. In terms of biological role, catalyzes the conversion of 3-deoxy-D-arabino-heptulosonate 7-phosphate (DAHP) to dehydroquinate (DHQ). This Escherichia coli (strain K12 / MC4100 / BW2952) protein is 3-dehydroquinate synthase.